The following is a 4042-amino-acid chain: Polyketide synthase-nonribosomal peptide synthetase ffsA (4042 aa).

The Ketosynthase family 3 (KS3) domain occupies 17–453; the sequence is REPIAIVGSA…GANAHAILEA (437 aa). Residues Cys-190, His-330, and His-373 each act as for beta-ketoacyl synthase activity in the active site. The segment at 561–878 is malonyl-CoA:ACP transacylase (MAT) domain; that stretch reads VFTGQGAQWK…TGLLSRGRPD (318 aa). The tract at residues 950 to 1083 is N-terminal hotdog fold; it reads HEILGTKCPD…GKLKVTLGEP (134 aa). The tract at residues 950–1249 is dehydratase (DH) domain; it reads HEILGTKCPD…LQTKPLANAT (300 aa). The region spanning 950–1251 is the PKS/mFAS DH domain; the sequence is HEILGTKCPD…TKPLANATAA (302 aa). The active-site Proton acceptor; for dehydratase activity is the His-982. The C-terminal hotdog fold stretch occupies residues 1098–1251; sequence MIDVDSERFY…TKPLANATAA (154 aa). Asp-1158 acts as the Proton donor; for dehydratase activity in catalysis. The segment at 1390 to 1613 is methyltransferase (MT) domain; sequence DNLLNDFYVH…VDDHVNFLRD (224 aa). Positions 2116 to 2289 are ketoreductase (KR)domain; that stretch reads TYWLVGLSGG…AGSAINIGTI (174 aa). The Carrier 1 domain occupies 2399–2476; sequence EAREIIEESL…EMVAAAQEKL (78 aa). Ser-2436 carries the O-(pantetheine 4'-phosphoryl)serine modification. Residues 2515 to 2601 form a disordered region; sequence EKAEYADFDD…FDSDSDNASI (87 aa). The span at 2520–2532 shows a compositional bias: acidic residues; sequence ADFDDENEEEGIP. The tract at residues 2629–3061 is condensation; it reads RTLPMSFGQT…ISRPSLYDPQ (433 aa). The interval 3089-3486 is adenylation; that stretch reads EIVKAHGSKV…EDGHLVLEGR (398 aa). One can recognise a Carrier 2 domain in the interval 3607-3684; the sequence is RDSTEKLKDI…AMARMVDPTA (78 aa). The residue at position 3644 (Ser-3644) is an O-(pantetheine 4'-phosphoryl)serine. Residues 3750–3971 form a reductase-like domain region; sequence ITGATGFLGK…DFVDVEKVAT (222 aa).

The protein in the C-terminal section; belongs to the NRP synthetase family.

It participates in mycotoxin biosynthesis. Its function is as follows. Hybrid PKS-NRPS synthetase; part of the gene cluster that mediates the biosynthesis of the cytotoxic leucine-containing cytochalasans, including aspochalasin C, aspochalasin E, TMC-169, flavichalasine F, aspergillin PZ, aspochalasin M and flavichalasine G. The first step in the pathway is catalyzed by the hybrid PKS-NRPS ffsA that utilizes 8 units of malonyl-CoA to iteratively assemble the octaketide chain before addition of L-leucine by the C-terminal NRPS modules. Because ffsA lacks a designated enoylreductase (ER) domain, the required activity is provided the enoyl reductase fssC. The methyltransferase (MT) domain of ffsA catalyzes the alpha-methylation at C10 and C14 using S-adenosyl-L-methionine as the methyl-donating cosubstrate. Reduction by the hydrolyase ffsE, followed by dehydration and intra-molecular Diels-Alder cyclization by the Diels-Alderase ffsF then yield the required isoindolone-fused macrocycle. A number of oxidative steps catalyzed by the tailoring cytochrome P450 monooxygenase ffsD, the FAD-linked oxidoreductase ffsJ and the short-chain dehydrogenase/reductase ffsI, are further required to afford the final products. This Aspergillus flavipes protein is Polyketide synthase-nonribosomal peptide synthetase ffsA.